Reading from the N-terminus, the 429-residue chain is Saccharopine dehydrogenase-like oxidoreductase (429 aa).

Ala-2 is subject to N-acetylalanine. Ser-217 is modified (phosphoserine).

It belongs to the saccharopine dehydrogenase family.

The protein is Saccharopine dehydrogenase-like oxidoreductase (SCCPDH) of Homo sapiens (Human).